The sequence spans 162 residues: Sec-independent protein translocase protein TatB (162 aa).

The helical transmembrane segment at 1-21 (MFDLGWTELLVIGVVALIVVG) threads the bilayer. Disordered regions lie at residues 69–111 (ATNP…DRAE) and 124–162 (AADRMAREAAEAAAKAEEAEAALSATPASTASSDSETKA). 2 stretches are compositionally biased toward basic and acidic residues: residues 83–111 (ATRDLTDSIDPTKFDPESETGKLAADRAE) and 124–141 (AADRMAREAAEAAAKAEE). Over residues 144–155 (AALSATPASTAS) the composition is skewed to low complexity.

This sequence belongs to the TatB family. As to quaternary structure, the Tat system comprises two distinct complexes: a TatABC complex, containing multiple copies of TatA, TatB and TatC subunits, and a separate TatA complex, containing only TatA subunits. Substrates initially bind to the TatABC complex, which probably triggers association of the separate TatA complex to form the active translocon.

It localises to the cell inner membrane. Functionally, part of the twin-arginine translocation (Tat) system that transports large folded proteins containing a characteristic twin-arginine motif in their signal peptide across membranes. Together with TatC, TatB is part of a receptor directly interacting with Tat signal peptides. TatB may form an oligomeric binding site that transiently accommodates folded Tat precursor proteins before their translocation. The polypeptide is Sec-independent protein translocase protein TatB (Ruegeria sp. (strain TM1040) (Silicibacter sp.)).